A 151-amino-acid polypeptide reads, in one-letter code: Deoxyuridine 5'-triphosphate nucleotidohydrolase (151 aa).

Residues Arg-70 to Gly-72, Asn-83, Leu-87 to Asp-89, and Met-97 each bind substrate.

Belongs to the dUTPase family. Mg(2+) serves as cofactor.

It catalyses the reaction dUTP + H2O = dUMP + diphosphate + H(+). It functions in the pathway pyrimidine metabolism; dUMP biosynthesis; dUMP from dCTP (dUTP route): step 2/2. Its function is as follows. This enzyme is involved in nucleotide metabolism: it produces dUMP, the immediate precursor of thymidine nucleotides and it decreases the intracellular concentration of dUTP so that uracil cannot be incorporated into DNA. This chain is Deoxyuridine 5'-triphosphate nucleotidohydrolase, found in Pseudomonas syringae pv. tomato (strain ATCC BAA-871 / DC3000).